The primary structure comprises 292 residues: 33 kDa chaperonin (292 aa).

2 disulfide bridges follow: C236/C238 and C269/C272.

This sequence belongs to the HSP33 family. Under oxidizing conditions two disulfide bonds are formed involving the reactive cysteines. Under reducing conditions zinc is bound to the reactive cysteines and the protein is inactive.

Its subcellular location is the cytoplasm. Functionally, redox regulated molecular chaperone. Protects both thermally unfolding and oxidatively damaged proteins from irreversible aggregation. Plays an important role in the bacterial defense system toward oxidative stress. The polypeptide is 33 kDa chaperonin (Ruminiclostridium cellulolyticum (strain ATCC 35319 / DSM 5812 / JCM 6584 / H10) (Clostridium cellulolyticum)).